The primary structure comprises 514 residues: MSVSKKPMVLVILDGYGYREEQQDNAIFSAKTPVMDALWANRPHTLIDASGLEVGLPDRQMGNSEVGHVNLGAGRIVYQDLTRLDVEIKDRAFFANPVLAGAVHKAKNAGKAVHIMGLLSAGGVHSHEDHIMAMVELAAERGAEKIYLHAFLDGRDTPPRSAESSLKKFEEKFAALGKGRVASIIGRYYAMDRDNRWDRVEKAYDLLTLAQGEFQADTAVAGLQAAYARDENDEFVKATVIRAEGQPDAAMEDGDALIFMNFRADRAREITRAFVNADFDGFARKKVVNVDFVMLTEYAADIKTAVAYPPASLVNTFGEWMAKNDKTQLRISETEKYAHVTFFFNGGVEESFKGEDRILINSPKVATYDLQPEMSSAELTEKLVAAIKSGKYDTIICNYPNGDMVGHTGVMEAAVKAVEALDHCVEEVAKAVESVGGQLLITADHGNAEQMRDPATGQAHTAHTNLPVPLIYVGDKNVKAVAGGKLSDIAPTMLSLMGMEIPQEMTGKPLFIVE.

Mn(2+) is bound by residues Asp-14 and Ser-64. The Phosphoserine intermediate role is filled by Ser-64. Substrate is bound by residues His-125, 155-156 (RD), Arg-187, Arg-193, 263-266 (RADR), and Lys-336. Mn(2+) is bound by residues Asp-403, His-407, Asp-444, His-445, and His-463.

This sequence belongs to the BPG-independent phosphoglycerate mutase family. In terms of assembly, monomer. Requires Mn(2+) as cofactor.

The catalysed reaction is (2R)-2-phosphoglycerate = (2R)-3-phosphoglycerate. It participates in carbohydrate degradation; glycolysis; pyruvate from D-glyceraldehyde 3-phosphate: step 3/5. In terms of biological role, catalyzes the interconversion of 2-phosphoglycerate and 3-phosphoglycerate. The polypeptide is 2,3-bisphosphoglycerate-independent phosphoglycerate mutase (Shigella flexneri).